Reading from the N-terminus, the 381-residue chain is Protein palisade (381 aa).

The signal sequence occupies residues 1–25 (MMMHSRNRSWTLTLLALGVVLATSA). Tandem repeats lie at residues 190–199 (PAAPAYEAPA), 200–209 (PPAPAYEAPA), 210–219 (PPAPAYEAPA), 220–229 (PAAPAYEAPA), 230–239 (PAAPAYEAPT), and 247–256 (PPAPAYEPPA). A 6 X 10 AA approximate tandem repeats of P-[AP]-A-P-A-Y-E-[AP]-P-[AT] region spans residues 190–256 (PAAPAYEAPA…PPAPAYEPPA (67 aa)). 2 disordered regions span residues 236-270 (EAPTTDYSAPAPPAPAYEPPASSYTQGYSQPAQPS) and 309-329 (TPTAPPPPPPPAPVYEAPSQN). The span at 311-321 (TAPPPPPPPAP) shows a compositional bias: pro residues.

Sulfated by pip; may be involved in embryo dorsal-ventral axis determination. Sulfation by pip may occur on covalently bound glycosaminoglycans. Post-translationally, may undergo both disulfide and non-disulfide cross-linking upon incorporation into the vitelline membrane. Present in the perivitelline space of stage 10 egg chambers and in the vitelline membrane adjacent to the oocyte in stage 13 and 14 egg chambers (at protein level).

It is found in the secreted. The protein resides in the extracellular space. Its subcellular location is the extracellular matrix. Minor protein component of the vitelline membrane. Involved in vitelline membrane biogenesis during late stages of oogenesis. Required for efficient disulfide and non-disulfide cross-linking of several vitelline membrane components. This chain is Protein palisade, found in Drosophila melanogaster (Fruit fly).